We begin with the raw amino-acid sequence, 236 residues long: Demethylmenaquinone methyltransferase (236 aa).

Residues Thr-62, Asp-80, 107–108, and Ser-124 contribute to the S-adenosyl-L-methionine site; that span reads DA.

This sequence belongs to the class I-like SAM-binding methyltransferase superfamily. MenG/UbiE family.

It carries out the reaction a 2-demethylmenaquinol + S-adenosyl-L-methionine = a menaquinol + S-adenosyl-L-homocysteine + H(+). It functions in the pathway quinol/quinone metabolism; menaquinone biosynthesis; menaquinol from 1,4-dihydroxy-2-naphthoate: step 2/2. Functionally, methyltransferase required for the conversion of demethylmenaquinol (DMKH2) to menaquinol (MKH2). The protein is Demethylmenaquinone methyltransferase of Thermobifida fusca (strain YX).